The primary structure comprises 550 residues: Glypican-1 (550 aa).

An N-terminal signal peptide occupies residues 1–20 (MRFFPWGFWLLCVASAPARG). Cystine bridges form between C29-C65, C59-C253, C66-C256, C188-C340, C243-C276, C265-C412, and C269-C398. Residues N76 and N113 are each glycosylated (N-linked (GlcNAc...) asparagine). N-linked (GlcNAc...) asparagine glycosylation occurs at N382. Disordered regions lie at residues 475 to 494 (FQDA…CPDD) and 502 to 522 (KSPS…GHGV). Positions 481-494 (DMSGSGSGDSCPDD) are enriched in low complexity. S483, S485, and S487 each carry an O-linked (Xyl...) (heparan sulfate) serine glycan. G524 carries the GPI-anchor amidated glycine lipid modification. A propeptide spans 525-550 (ASSRSLPSAFLLFLSGASIVVQHLWR) (removed in mature form).

Belongs to the glypican family. Post-translationally, O-glycosylated with heparan sulfate.

The protein resides in the cell membrane. The protein localises to the endosome. Its subcellular location is the secreted. It localises to the extracellular space. Functionally, cell surface proteoglycan that bears heparan sulfate. Modulates Wnt-signaling pathway. This chain is Glypican-1 (GPC1), found in Gallus gallus (Chicken).